The sequence spans 61 residues: Delta-actitoxin-Avd2c (61 aa).

Positions 1 to 20 are cleaved as a signal peptide; that stretch reads MMNRLLVFLMLGAFMLVVSA. The propeptide occupies 21–31; it reads NDAYGGDESLG. 3 cysteine pairs are disulfide-bonded: Cys-36-Cys-51, Cys-37-Cys-45, and Cys-39-Cys-56.

Belongs to the sea anemone short toxin (type III) family.

The protein resides in the secreted. It localises to the nematocyst. Its function is as follows. Sodium channel inhibitor. 5 uM completely inhibits voltage-gated sodium channel (Nav) inactivation. In Anemonia viridis (Snakelocks anemone), this protein is Delta-actitoxin-Avd2c.